The primary structure comprises 337 residues: Holliday junction branch migration complex subunit RuvB (337 aa).

The large ATPase domain (RuvB-L) stretch occupies residues 1 to 181 (MQRLVEIERF…FGMNFRMQFY (181 aa)). ATP is bound by residues Leu-20, Arg-21, Gly-62, Lys-65, Thr-66, Thr-67, 128–130 (EDF), Arg-171, Tyr-181, and Arg-218. Thr-66 lines the Mg(2+) pocket. A small ATPAse domain (RuvB-S) region spans residues 182–252 (SPEELSKIIS…RAQYALDELG (71 aa)). A head domain (RuvB-H) region spans residues 255–337 (SYGFDEMDIK…MPALDDGGLF (83 aa)). 2 residues coordinate DNA: Arg-309 and Arg-314.

It belongs to the RuvB family. As to quaternary structure, homohexamer. Forms an RuvA(8)-RuvB(12)-Holliday junction (HJ) complex. HJ DNA is sandwiched between 2 RuvA tetramers; dsDNA enters through RuvA and exits via RuvB. An RuvB hexamer assembles on each DNA strand where it exits the tetramer. Each RuvB hexamer is contacted by two RuvA subunits (via domain III) on 2 adjacent RuvB subunits; this complex drives branch migration. In the full resolvosome a probable DNA-RuvA(4)-RuvB(12)-RuvC(2) complex forms which resolves the HJ.

Its subcellular location is the cytoplasm. It carries out the reaction ATP + H2O = ADP + phosphate + H(+). Functionally, the RuvA-RuvB-RuvC complex processes Holliday junction (HJ) DNA during genetic recombination and DNA repair, while the RuvA-RuvB complex plays an important role in the rescue of blocked DNA replication forks via replication fork reversal (RFR). RuvA specifically binds to HJ cruciform DNA, conferring on it an open structure. The RuvB hexamer acts as an ATP-dependent pump, pulling dsDNA into and through the RuvAB complex. RuvB forms 2 homohexamers on either side of HJ DNA bound by 1 or 2 RuvA tetramers; 4 subunits per hexamer contact DNA at a time. Coordinated motions by a converter formed by DNA-disengaged RuvB subunits stimulates ATP hydrolysis and nucleotide exchange. Immobilization of the converter enables RuvB to convert the ATP-contained energy into a lever motion, pulling 2 nucleotides of DNA out of the RuvA tetramer per ATP hydrolyzed, thus driving DNA branch migration. The RuvB motors rotate together with the DNA substrate, which together with the progressing nucleotide cycle form the mechanistic basis for DNA recombination by continuous HJ branch migration. Branch migration allows RuvC to scan DNA until it finds its consensus sequence, where it cleaves and resolves cruciform DNA. In Sulfurimonas denitrificans (strain ATCC 33889 / DSM 1251) (Thiomicrospira denitrificans (strain ATCC 33889 / DSM 1251)), this protein is Holliday junction branch migration complex subunit RuvB.